A 295-amino-acid polypeptide reads, in one-letter code: Defective in cullin neddylation protein 1 (295 aa).

The region spanning 8-45 (QKTKLRQFVQWTQVTEAVSLNFLAKANWNIEYAMTLYF) is the UBA-like domain. A DCUN1 domain is found at 60 to 272 (VDRSNIERLF…LIDQFVDYCR (213 aa)).

Interacts with the cullin cul-3. Interacts with ubiquitin via its UBA-like domain. Interacts with ned-8/nedd8.

It localises to the nucleus. Its function is as follows. Required for neddylation of cullin components of SCF-type E3 ubiquitin ligase complexes. Neddylation of cullins play an essential role in the regulation of SCF-type complexes activity. Does not act by preventing deneddylation, but rather facilitates neddylation, possibly by acting with rbx-1 to recruit the Nedd8-charged E2 enzyme to the cullin component of SCF-type complexes. The protein is Defective in cullin neddylation protein 1 (dcn-1) of Caenorhabditis elegans.